A 124-amino-acid chain; its full sequence is Small ribosomal subunit protein uS13 (124 aa).

Positions 94–124 (GLPLRGQRTKNNSRTRKGRRKTVANKKKATK) are disordered. Over residues 100–124 (QRTKNNSRTRKGRRKTVANKKKATK) the composition is skewed to basic residues.

This sequence belongs to the universal ribosomal protein uS13 family. Part of the 30S ribosomal subunit. Forms a loose heterodimer with protein S19. Forms two bridges to the 50S subunit in the 70S ribosome.

In terms of biological role, located at the top of the head of the 30S subunit, it contacts several helices of the 16S rRNA. In the 70S ribosome it contacts the 23S rRNA (bridge B1a) and protein L5 of the 50S subunit (bridge B1b), connecting the 2 subunits; these bridges are implicated in subunit movement. Contacts the tRNAs in the A and P-sites. The chain is Small ribosomal subunit protein uS13 from Christiangramia forsetii (strain DSM 17595 / CGMCC 1.15422 / KT0803) (Gramella forsetii).